A 256-amino-acid polypeptide reads, in one-letter code: Zinc import ATP-binding protein ZnuC 1 (256 aa).

The ABC transporter domain maps to 5–220; sequence LTLQDVCVVF…PKYIALFGQQ (216 aa). 37–44 contributes to the ATP binding site; the sequence is GPNGAGKS. Positions 232 to 256 are disordered; sequence HHHNHDLSGEPSDGSCCSKNKKAHQ.

This sequence belongs to the ABC transporter superfamily. Zinc importer (TC 3.A.1.15.5) family. The complex is composed of two ATP-binding proteins (ZnuC), two transmembrane proteins (ZnuB) and a solute-binding protein (ZnuA).

The protein localises to the cell inner membrane. The enzyme catalyses Zn(2+)(out) + ATP(in) + H2O(in) = Zn(2+)(in) + ADP(in) + phosphate(in) + H(+)(in). Part of the ABC transporter complex ZnuABC involved in zinc import. Responsible for energy coupling to the transport system. The protein is Zinc import ATP-binding protein ZnuC 1 of Aliivibrio fischeri (strain ATCC 700601 / ES114) (Vibrio fischeri).